A 153-amino-acid polypeptide reads, in one-letter code: 1,4-dihydroxy-2-naphthoyl-CoA hydrolase (153 aa).

The active site involves aspartate 21.

The protein belongs to the 4-hydroxybenzoyl-CoA thioesterase family. DHNA-CoA hydrolase subfamily.

The enzyme catalyses 1,4-dihydroxy-2-naphthoyl-CoA + H2O = 1,4-dihydroxy-2-naphthoate + CoA + H(+). It functions in the pathway cofactor biosynthesis; phylloquinone biosynthesis. The protein operates within quinol/quinone metabolism; 1,4-dihydroxy-2-naphthoate biosynthesis; 1,4-dihydroxy-2-naphthoate from chorismate: step 7/7. Functionally, catalyzes the hydrolysis of 1,4-dihydroxy-2-naphthoyl-CoA (DHNA-CoA) to 1,4-dihydroxy-2-naphthoate (DHNA), a reaction involved in phylloquinone (vitamin K1) biosynthesis. This is 1,4-dihydroxy-2-naphthoyl-CoA hydrolase from Synechococcus sp. (strain WH7803).